A 65-amino-acid chain; its full sequence is MPKLKTHRGAAKRFKLTGSGKVRRHHANASHIMTTKTTKRKRNLRKSTILDKRDEKGIKRLIPYL.

Residues 20–42 (GKVRRHHANASHIMTTKTTKRKR) are disordered.

Belongs to the bacterial ribosomal protein bL35 family.

The chain is Large ribosomal subunit protein bL35 from Syntrophus aciditrophicus (strain SB).